The primary structure comprises 191 residues: ATP-dependent dethiobiotin synthetase BioD 2 (191 aa).

13-18 provides a ligand contact to ATP; the sequence is DVGKTI. A Mg(2+)-binding site is contributed by threonine 17. Residue lysine 38 is part of the active site. Threonine 42 provides a ligand contact to substrate. ATP contacts are provided by residues aspartate 50 and 115–118; that span reads EGAG. The Mg(2+) site is built by aspartate 50 and glutamate 115.

The protein belongs to the dethiobiotin synthetase family. In terms of assembly, homodimer. Requires Mg(2+) as cofactor.

The protein resides in the cytoplasm. The catalysed reaction is (7R,8S)-7,8-diammoniononanoate + CO2 + ATP = (4R,5S)-dethiobiotin + ADP + phosphate + 3 H(+). It functions in the pathway cofactor biosynthesis; biotin biosynthesis; biotin from 7,8-diaminononanoate: step 1/2. Catalyzes a mechanistically unusual reaction, the ATP-dependent insertion of CO2 between the N7 and N8 nitrogen atoms of 7,8-diaminopelargonic acid (DAPA, also called 7,8-diammoniononanoate) to form a ureido ring. The polypeptide is ATP-dependent dethiobiotin synthetase BioD 2 (Haemophilus influenzae (strain ATCC 51907 / DSM 11121 / KW20 / Rd)).